Consider the following 363-residue polypeptide: 5-hydroxytryptamine receptor 1E (363 aa).

At 1-21 (MNITNCTTEASMAIRPKTITE) the chain is on the extracellular side. Residues Asn2 and Asn5 are each glycosylated (N-linked (GlcNAc...) asparagine). Residues 22 to 45 (KMLICMTLVVITTLTTLLNLAVIM) form a helical membrane-spanning segment. At 46–59 (AIGTTKKLHQPANY) the chain is on the cytoplasmic side. A helical membrane pass occupies residues 60–84 (LICSLAVTDLLVAVLVMPLSIIYIV). The Extracellular portion of the chain corresponds to 85 to 92 (MDRWKLGY). The helical transmembrane segment at 93-118 (FLCEVWLSVDMTCCTCSILHLCVIAL) threads the bilayer. Cys95 and Cys173 are oxidised to a cystine. Residues Asp102 and Cys106 each contribute to the serotonin site. The short motif at 119 to 121 (DRY) is the DRY motif; important for ligand-induced conformation changes element. The Cytoplasmic segment spans residues 119–138 (DRYWAITNAIEYARKRTAKR). The helical transmembrane segment at 139–157 (AALMILTVWTISIFISMPP) threads the bilayer. The Extracellular portion of the chain corresponds to 158–179 (LFWRSHRRLSPPPSQCTIQHDH). The chain crosses the membrane as a helical span at residues 180 to 203 (VIYTIYSTLGAFYIPLTLILILYY). The Cytoplasmic portion of the chain corresponds to 204-291 (RIYHAAKSLY…SSTRERKAAR (88 aa)). The helical transmembrane segment at 292 to 316 (ILGLILGAFILSWLPFFIKELIVGL) threads the bilayer. Residues 317 to 322 (SIYTVS) lie on the Extracellular side of the membrane. A helical transmembrane segment spans residues 323 to 345 (SEVADFLTWLGYVNSLINPLLYT). Positions 340-344 (NPLLY) match the NPxxY motif; important for ligand-induced conformation changes and signaling motif. Topologically, residues 346–363 (SFNEDFKLAFKKLIRCRE) are cytoplasmic.

Belongs to the G-protein coupled receptor 1 family.

It localises to the cell membrane. G-protein coupled receptor for 5-hydroxytryptamine (serotonin). Also functions as a receptor for various alkaloids and psychoactive substances. Ligand binding causes a conformation change that triggers signaling via guanine nucleotide-binding proteins (G proteins) and modulates the activity of downstream effectors, such as adenylate cyclase. HTR1E is coupled to G(i)/G(o) G alpha proteins and mediates inhibitory neurotransmission by inhibiting adenylate cyclase activity. The chain is 5-hydroxytryptamine receptor 1E (HTR1E) from Pan troglodytes (Chimpanzee).